The chain runs to 279 residues: Putative pyruvate, phosphate dikinase regulatory protein (279 aa).

156 to 163 serves as a coordination point for ADP; sequence GISRVGKT.

Belongs to the pyruvate, phosphate/water dikinase regulatory protein family. PDRP subfamily.

The catalysed reaction is N(tele)-phospho-L-histidyl/L-threonyl-[pyruvate, phosphate dikinase] + ADP = N(tele)-phospho-L-histidyl/O-phospho-L-threonyl-[pyruvate, phosphate dikinase] + AMP + H(+). The enzyme catalyses N(tele)-phospho-L-histidyl/O-phospho-L-threonyl-[pyruvate, phosphate dikinase] + phosphate + H(+) = N(tele)-phospho-L-histidyl/L-threonyl-[pyruvate, phosphate dikinase] + diphosphate. Functionally, bifunctional serine/threonine kinase and phosphorylase involved in the regulation of the pyruvate, phosphate dikinase (PPDK) by catalyzing its phosphorylation/dephosphorylation. This is Putative pyruvate, phosphate dikinase regulatory protein from Chloroflexus aurantiacus (strain ATCC 29366 / DSM 635 / J-10-fl).